Consider the following 150-residue polypeptide: Probable cyclic pyranopterin monophosphate synthase (150 aa).

Substrate is bound by residues 68–70 and 104–105; these read YCH and ME. Residue aspartate 119 is part of the active site.

This sequence belongs to the MoaC family. As to quaternary structure, homohexamer; trimer of dimers.

The enzyme catalyses (8S)-3',8-cyclo-7,8-dihydroguanosine 5'-triphosphate = cyclic pyranopterin phosphate + diphosphate. Its pathway is cofactor biosynthesis; molybdopterin biosynthesis. In terms of biological role, catalyzes the conversion of (8S)-3',8-cyclo-7,8-dihydroguanosine 5'-triphosphate to cyclic pyranopterin monophosphate (cPMP). The chain is Probable cyclic pyranopterin monophosphate synthase from Thermoplasma volcanium (strain ATCC 51530 / DSM 4299 / JCM 9571 / NBRC 15438 / GSS1).